Reading from the N-terminus, the 505-residue chain is Apolipoprotein N-acyltransferase (505 aa).

Helical transmembrane passes span 15 to 46, 55 to 75, 89 to 109, 129 to 149, 161 to 181, and 192 to 212; these read AAFVGVITPLAFAPYQFWPLALLSPFILLLLL, ALIAYLWGIGQFAVGISWVHV, LFLMTLLVGYLALYPSLFGWL, LWLITDWLRGWVMTGFPWLWL, FAPIGGVELITLLLLFCAGSL, and MACIPLVVYATGYGLQAMQWV. Residues 225–471 form the CN hydrolase domain; the sequence is IQGNIEQGLK…TGVLKATVTP (247 aa). E264 acts as the Proton acceptor in catalysis. The active site involves K330. C382 (nucleophile) is an active-site residue. The chain crosses the membrane as a helical span at residues 479–499; sequence FLWGTTPLYLWVGLAAGFAFW.

Belongs to the CN hydrolase family. Apolipoprotein N-acyltransferase subfamily.

It localises to the cell inner membrane. The catalysed reaction is N-terminal S-1,2-diacyl-sn-glyceryl-L-cysteinyl-[lipoprotein] + a glycerophospholipid = N-acyl-S-1,2-diacyl-sn-glyceryl-L-cysteinyl-[lipoprotein] + a 2-acyl-sn-glycero-3-phospholipid + H(+). Its pathway is protein modification; lipoprotein biosynthesis (N-acyl transfer). Functionally, catalyzes the phospholipid dependent N-acylation of the N-terminal cysteine of apolipoprotein, the last step in lipoprotein maturation. This Vibrio cholerae serotype O1 (strain ATCC 39315 / El Tor Inaba N16961) protein is Apolipoprotein N-acyltransferase.